The chain runs to 273 residues: Large ribosomal subunit protein uL2 (273 aa).

2 disordered regions span residues 34–54 (LEKK…TRHI) and 223–273 (VAMN…RRRK).

This sequence belongs to the universal ribosomal protein uL2 family. In terms of assembly, part of the 50S ribosomal subunit. Forms a bridge to the 30S subunit in the 70S ribosome.

Its function is as follows. One of the primary rRNA binding proteins. Required for association of the 30S and 50S subunits to form the 70S ribosome, for tRNA binding and peptide bond formation. It has been suggested to have peptidyltransferase activity; this is somewhat controversial. Makes several contacts with the 16S rRNA in the 70S ribosome. This chain is Large ribosomal subunit protein uL2, found in Pseudomonas aeruginosa (strain LESB58).